Reading from the N-terminus, the 473-residue chain is Putative sulfoquinovose importer (473 aa).

Helical transmembrane passes span 18 to 38 (AYGV…LYLL), 45 to 65 (LGMP…FTAF), 88 to 108 (PFIL…FFAT), 110 to 130 (FTLP…GLFY), 160 to 180 (GGAT…QALF), 187 to 207 (GYLI…WWCF), 239 to 259 (LLVL…KLAI), 276 to 296 (WMGF…PAAV), 317 to 337 (ILNF…CIAF), 380 to 400 (ISAA…GYIP), and 415 to 435 (LIFL…GFFY).

It belongs to the sodium:galactoside symporter (TC 2.A.2) family.

It localises to the cell inner membrane. Could be involved in sulfoquinovose import. The polypeptide is Putative sulfoquinovose importer (yihO) (Salmonella typhimurium (strain LT2 / SGSC1412 / ATCC 700720)).